The following is a 161-amino-acid chain: Nucleotide-binding protein Tbd_1846 (161 aa).

It belongs to the YajQ family.

In terms of biological role, nucleotide-binding protein. The polypeptide is Nucleotide-binding protein Tbd_1846 (Thiobacillus denitrificans (strain ATCC 25259 / T1)).